The sequence spans 559 residues: Leucine-rich repeat protein soc-2 (559 aa).

Residues 1–17 are compositionally biased toward basic and acidic residues; the sequence is METSKEFEFRPAKETSR. Residues 1 to 55 are disordered; that stretch reads METSKEFEFRPAKETSRSKSPGGIVGRLSNFARNKARHSLSEKGSNSVGGSGGAG. LRR repeat units lie at residues 74–95, 97–118, 120–142, 143–164, 166–187, 189–210, 212–233, 235–256, 258–279, 281–302, 305–326, 329–350, 353–374, 376–397, 399–420, 422–443, 445–466, 468–489, 491–513, and 515–536; these read QDQRLDLSSIEITSIPSPIKEL, QLTELFLYKNKLTCLPTEIGQL, NLKKLGLSENALTSLPDSLASLE, SLETLDLRHNKLTEVPSVIYKI, SLETLWLRYNRIVAVDEQIGNL, KLKMLDVRENKIRELPSAIGKL, SLVVCLVSYNHLTRVPEEIGDC, SLTQLDLQHNDLSELPYSIGKL, NLVRIGIRYNKIRCIPSELESC, QLEEFIVESNHLQLLPPNLLTM, KIHTVNLSRNELTAFPAGGPQQ, STVTINMEHNQISKIPIGIFSK, RLTKLNLKENELVSLPLDMGSW, SITELNLSTNQLKVLPEDIEKL, NLEILVLSNNQLKKLPNQIGNL, KLRELDLEENELETVPTEIGFL, HLTKLWVQSNKILTLPRSIGNL, SLQDLRLGENNLTAIPEEIGHL, SLKSLYLNDNSSLHNLPFELALC, and SLEIMSIENSPLSQIPPEITAG.

The protein belongs to the SHOC2 family. As to quaternary structure, interacts with let-60.

Acts as a Ras effector and participates in MAPK pathway activation. Probably acts as a scaffolding protein in a protein phosphatase complex that specifically dephosphorylates Raf kinase and stimulates Raf activity at specialized signaling complexes upon Ras activation. Required for vulval development. Involved in fluid homeostasis. Plays a role in nicotinic acetylcholine receptor (nAChR)-mediated sensitivity to nicotine. The chain is Leucine-rich repeat protein soc-2 (soc-2) from Caenorhabditis elegans.